We begin with the raw amino-acid sequence, 342 residues long: Flavanone 3-dioxygenase 2 (342 aa).

Residues Gln193–Pro293 enclose the Fe2OG dioxygenase domain. Residues His217, Asp219, and His274 each contribute to the Fe cation site. Arg284 serves as a coordination point for 2-oxoglutarate.

The protein belongs to the iron/ascorbate-dependent oxidoreductase family. Fe(2+) is required as a cofactor. The cofactor is L-ascorbate. In terms of tissue distribution, expressed in roots, leaves and stems. Expressed at low levels in seeds.

The enzyme catalyses a (2S)-flavan-4-one + 2-oxoglutarate + O2 = a (2R,3R)-dihydroflavonol + succinate + CO2. It participates in secondary metabolite biosynthesis; flavonoid biosynthesis. Its function is as follows. Catalyzes the 3-beta-hydroxylation of 2S-flavanones to 2R,3R-dihydroflavonols which are intermediates in the biosynthesis of flavonols, anthocyanidins, catechins and proanthocyanidins in plants. Converts (2S)-eriodictyol to (+)-taxifolin and (2S)-naringenin to (+)-(2R/3R)-dihydrokaempferol in vitro. The chain is Flavanone 3-dioxygenase 2 from Oryza sativa subsp. japonica (Rice).